A 247-amino-acid polypeptide reads, in one-letter code: Eukaryotic translation initiation factor 6-1 (247 aa).

Belongs to the eIF-6 family. In terms of assembly, monomer. Associates with the 60S ribosomal subunit.

The protein resides in the cytoplasm. Its subcellular location is the nucleus. It is found in the nucleolus. In terms of biological role, binds to the 60S ribosomal subunit and prevents its association with the 40S ribosomal subunit to form the 80S initiation complex in the cytoplasm. May also be involved in ribosome biogenesis. This chain is Eukaryotic translation initiation factor 6-1, found in Arabidopsis thaliana (Mouse-ear cress).